Consider the following 222-residue polypeptide: Peptide methionine sulfoxide reductase MsrA (222 aa).

Cys-60 is an active-site residue.

This sequence belongs to the MsrA Met sulfoxide reductase family.

It catalyses the reaction L-methionyl-[protein] + [thioredoxin]-disulfide + H2O = L-methionyl-(S)-S-oxide-[protein] + [thioredoxin]-dithiol. It carries out the reaction [thioredoxin]-disulfide + L-methionine + H2O = L-methionine (S)-S-oxide + [thioredoxin]-dithiol. Has an important function as a repair enzyme for proteins that have been inactivated by oxidation. Catalyzes the reversible oxidation-reduction of methionine sulfoxide in proteins to methionine. In Pseudomonas putida (strain ATCC 47054 / DSM 6125 / CFBP 8728 / NCIMB 11950 / KT2440), this protein is Peptide methionine sulfoxide reductase MsrA.